Reading from the N-terminus, the 183-residue chain is Ribosome maturation factor RimM (183 aa).

One can recognise a PRC barrel domain in the interval 104–183 (EGDYYWKDLM…TIEVDWDPGF (80 aa)).

It belongs to the RimM family. Binds ribosomal protein uS19.

Its subcellular location is the cytoplasm. Its function is as follows. An accessory protein needed during the final step in the assembly of 30S ribosomal subunit, possibly for assembly of the head region. Essential for efficient processing of 16S rRNA. May be needed both before and after RbfA during the maturation of 16S rRNA. It has affinity for free ribosomal 30S subunits but not for 70S ribosomes. The polypeptide is Ribosome maturation factor RimM (Salmonella arizonae (strain ATCC BAA-731 / CDC346-86 / RSK2980)).